An 81-amino-acid polypeptide reads, in one-letter code: Photosystem I iron-sulfur center (81 aa).

2 consecutive 4Fe-4S ferredoxin-type domains span residues A2–W31 and I39–Y68. C11, C14, C17, C21, C48, C51, C54, and C58 together coordinate [4Fe-4S] cluster.

The eukaryotic PSI reaction center is composed of at least 11 subunits. [4Fe-4S] cluster serves as cofactor.

It localises to the plastid. Its subcellular location is the chloroplast thylakoid membrane. The enzyme catalyses reduced [plastocyanin] + hnu + oxidized [2Fe-2S]-[ferredoxin] = oxidized [plastocyanin] + reduced [2Fe-2S]-[ferredoxin]. Its function is as follows. Apoprotein for the two 4Fe-4S centers FA and FB of photosystem I (PSI); essential for photochemical activity. FB is the terminal electron acceptor of PSI, donating electrons to ferredoxin. The C-terminus interacts with PsaA/B/D and helps assemble the protein into the PSI complex. Required for binding of PsaD and PsaE to PSI. PSI is a plastocyanin-ferredoxin oxidoreductase, converting photonic excitation into a charge separation, which transfers an electron from the donor P700 chlorophyll pair to the spectroscopically characterized acceptors A0, A1, FX, FA and FB in turn. The protein is Photosystem I iron-sulfur center (psaC) of Anthoceros angustus (Hornwort).